The following is a 595-amino-acid chain: Inactive serine/threonine-protein kinase PLK5 (595 aa).

The 253-residue stretch at 27–279 (YRRGKLIGKG…LDHLLQDDFF (253 aa)) folds into the Protein kinase domain. ATP is bound by residues 33 to 41 (IGKGAFSRC) and lysine 56. Aspartate 150 acts as the Proton acceptor in catalysis. The tract at residues 326 to 350 (FTSKEASGPGEEGTEPDHMEAGNEE) is disordered. Over residues 340–350 (EPDHMEAGNEE) the composition is skewed to basic and acidic residues. POLO box domains are found at residues 413–491 (WAPK…YMQR) and 509–595 (DISL…LQSV).

It belongs to the protein kinase superfamily. Ser/Thr protein kinase family. CDC5/Polo subfamily. Expressed in the cerebellum, eye and brain cortex (at protein level). Expressed in highly differentiated tissues, such as brain, eyes and ovary. Not detectable in proliferating tissues, such as the colon, spleen and placenta.

Its subcellular location is the nucleus. The protein localises to the nucleolus. It is found in the cytoplasm. Functionally, inactive serine/threonine-protein kinase that plays a role in cell cycle progression and neuronal differentiation. In Mus musculus (Mouse), this protein is Inactive serine/threonine-protein kinase PLK5.